An 840-amino-acid polypeptide reads, in one-letter code: Probable alpha-glucuronidase A (840 aa).

An N-terminal signal peptide occupies residues 1-19; sequence MWSGIPIFALLSSIGIAAA. N50, N149, N222, N262, N279, N310, N465, N527, N576, N610, N682, N723, and N732 each carry an N-linked (GlcNAc...) asparagine glycan.

It belongs to the glycosyl hydrolase 67 family.

The protein resides in the secreted. It carries out the reaction an alpha-D-glucuronoside + H2O = D-glucuronate + an alcohol. Its function is as follows. Alpha-glucuronidase involved in the hydrolysis of xylan, a major structural heterogeneous polysaccharide found in plant biomass representing the second most abundant polysaccharide in the biosphere, after cellulose. Releases 4-O-methylglucuronic acid from xylan. This is Probable alpha-glucuronidase A (aguA) from Aspergillus fumigatus (strain ATCC MYA-4609 / CBS 101355 / FGSC A1100 / Af293) (Neosartorya fumigata).